The primary structure comprises 186 residues: Elongation factor P (186 aa).

Belongs to the elongation factor P family.

It is found in the cytoplasm. It participates in protein biosynthesis; polypeptide chain elongation. In terms of biological role, involved in peptide bond synthesis. Stimulates efficient translation and peptide-bond synthesis on native or reconstituted 70S ribosomes in vitro. Probably functions indirectly by altering the affinity of the ribosome for aminoacyl-tRNA, thus increasing their reactivity as acceptors for peptidyl transferase. This Thiobacillus denitrificans (strain ATCC 25259 / T1) protein is Elongation factor P.